Here is a 109-residue protein sequence, read N- to C-terminus: Nucleoid-associated protein Spro_1136 (109 aa).

Disordered regions lie at residues 1-21 and 90-109; these read MFGK…QEKM and EKMA…KMPF. The segment covering 11–21 has biased composition (low complexity); the sequence is MKQAQQMQEKM.

This sequence belongs to the YbaB/EbfC family. As to quaternary structure, homodimer.

The protein resides in the cytoplasm. It is found in the nucleoid. Its function is as follows. Binds to DNA and alters its conformation. May be involved in regulation of gene expression, nucleoid organization and DNA protection. This chain is Nucleoid-associated protein Spro_1136, found in Serratia proteamaculans (strain 568).